The primary structure comprises 155 residues: Troponin C, body wall muscle (155 aa).

V1 bears the N-acetylvaline mark. 4 EF-hand domains span residues D7–N43, P44–A79, R88–N121, and V122–Q155. 5 residues coordinate Ca(2+): D57, D59, S61, T63, and E68. Ca(2+) contacts are provided by D135, N137, D139, Q141, and E146.

This sequence belongs to the troponin C family.

Functionally, troponin is the central regulatory protein of muscle contraction. Tn consists of three components: Tn-I which is the inhibitor of actomyosin ATPase, Tn-T which contains the binding site for tropomyosin and Tn-C. The binding of calcium to Tn-C abolishes the inhibitory action of Tn on actin filaments. The sequence is that of Troponin C, body wall muscle from Halocynthia roretzi (Sea squirt).